A 208-amino-acid chain; its full sequence is Uracil phosphoribosyltransferase (208 aa).

5-phospho-alpha-D-ribose 1-diphosphate-binding positions include Arg-78, Arg-103, and Asp-130 to Ser-138. Uracil-binding positions include Ile-193 and Gly-198–Ala-200. Position 199 (Asp-199) interacts with 5-phospho-alpha-D-ribose 1-diphosphate.

Belongs to the UPRTase family. Mg(2+) serves as cofactor.

It catalyses the reaction UMP + diphosphate = 5-phospho-alpha-D-ribose 1-diphosphate + uracil. Its pathway is pyrimidine metabolism; UMP biosynthesis via salvage pathway; UMP from uracil: step 1/1. Its activity is regulated as follows. Allosterically activated by GTP. Catalyzes the conversion of uracil and 5-phospho-alpha-D-ribose 1-diphosphate (PRPP) to UMP and diphosphate. This is Uracil phosphoribosyltransferase from Mannheimia succiniciproducens (strain KCTC 0769BP / MBEL55E).